A 188-amino-acid chain; its full sequence is Pyridoxal 5'-phosphate synthase subunit PdxT (188 aa).

47-49 (GES) is a binding site for L-glutamine. The active-site Nucleophile is the Cys-79. Residues Arg-105 and 134 to 135 (IR) each bind L-glutamine. Catalysis depends on charge relay system residues His-170 and Glu-172.

The protein belongs to the glutaminase PdxT/SNO family. In terms of assembly, in the presence of PdxS, forms a dodecamer of heterodimers. Only shows activity in the heterodimer.

It carries out the reaction aldehydo-D-ribose 5-phosphate + D-glyceraldehyde 3-phosphate + L-glutamine = pyridoxal 5'-phosphate + L-glutamate + phosphate + 3 H2O + H(+). The enzyme catalyses L-glutamine + H2O = L-glutamate + NH4(+). It participates in cofactor biosynthesis; pyridoxal 5'-phosphate biosynthesis. Catalyzes the hydrolysis of glutamine to glutamate and ammonia as part of the biosynthesis of pyridoxal 5'-phosphate. The resulting ammonia molecule is channeled to the active site of PdxS. This chain is Pyridoxal 5'-phosphate synthase subunit PdxT, found in Listeria monocytogenes serovar 1/2a (strain ATCC BAA-679 / EGD-e).